A 207-amino-acid chain; its full sequence is Peptidyl-tRNA hydrolase (207 aa).

Residue Y30 participates in tRNA binding. H35 functions as the Proton acceptor in the catalytic mechanism. 3 residues coordinate tRNA: Y81, N83, and N129.

Belongs to the PTH family. Monomer.

The protein resides in the cytoplasm. It carries out the reaction an N-acyl-L-alpha-aminoacyl-tRNA + H2O = an N-acyl-L-amino acid + a tRNA + H(+). Its function is as follows. Hydrolyzes ribosome-free peptidyl-tRNAs (with 1 or more amino acids incorporated), which drop off the ribosome during protein synthesis, or as a result of ribosome stalling. Functionally, catalyzes the release of premature peptidyl moieties from peptidyl-tRNA molecules trapped in stalled 50S ribosomal subunits, and thus maintains levels of free tRNAs and 50S ribosomes. This chain is Peptidyl-tRNA hydrolase, found in Bordetella avium (strain 197N).